A 202-amino-acid polypeptide reads, in one-letter code: N-(5'-phosphoribosyl)anthranilate isomerase (202 aa).

This sequence belongs to the TrpF family.

The catalysed reaction is N-(5-phospho-beta-D-ribosyl)anthranilate = 1-(2-carboxyphenylamino)-1-deoxy-D-ribulose 5-phosphate. It functions in the pathway amino-acid biosynthesis; L-tryptophan biosynthesis; L-tryptophan from chorismate: step 3/5. The protein is N-(5'-phosphoribosyl)anthranilate isomerase of Bacillus cereus (strain ATCC 14579 / DSM 31 / CCUG 7414 / JCM 2152 / NBRC 15305 / NCIMB 9373 / NCTC 2599 / NRRL B-3711).